Reading from the N-terminus, the 318-residue chain is Probable tyrosine phosphatase protein N1 (318 aa).

The Tyrosine-protein phosphatase domain maps to 26-292 (IVRLEHHQVI…LILQPGYYVL (267 aa)). The Phosphocysteine intermediate role is filled by Cys-233.

Belongs to the protein-tyrosine phosphatase family.

The enzyme catalyses O-phospho-L-tyrosyl-[protein] + H2O = L-tyrosyl-[protein] + phosphate. In Microplitis demolitor bracovirus (isolate Webb) (MdBV), this protein is Probable tyrosine phosphatase protein N1 (N3).